A 261-amino-acid polypeptide reads, in one-letter code: Cytochrome c oxidase subunit 3 (261 aa).

Topologically, residues 1–15 are mitochondrial matrix; sequence MTHQTHAYHTVNPSP. The chain crosses the membrane as a helical span at residues 16–34; the sequence is WPLTGALSALLMTSGLIMW. Topologically, residues 35 to 40 are mitochondrial intermembrane; that stretch reads FHFNSP. The chain crosses the membrane as a helical span at residues 41-66; sequence LLLVLGLTTNFLTMYQWWRDIIREST. At 67–72 the chain is on the mitochondrial matrix side; the sequence is FQGHHT. The helical transmembrane segment at 73–105 threads the bilayer; the sequence is TIVQKGLRYGMILFIVSEVFFFAGFFWAFYHSS. At 106-128 the chain is on the mitochondrial intermembrane side; the sequence is LAPTPELGGCWPPTGINPLNPLE. The chain crosses the membrane as a helical span at residues 129–152; it reads VPLLNTSVLLASGVSITWAHHSLM. Residues 153–155 lie on the Mitochondrial matrix side of the membrane; the sequence is EGH. Residues 156-183 traverse the membrane as a helical segment; sequence RKHMLQALFITIALGVYFTLLQASEYYE. Over 184 to 190 the chain is Mitochondrial intermembrane; that stretch reads APFTISD. A helical transmembrane segment spans residues 191-223; it reads GIYGSTFFVATGFHGLHVIIGSSFLIVCFMRQL. Over 224–232 the chain is Mitochondrial matrix; it reads KFHFTSSHH. A helical membrane pass occupies residues 233–256; it reads FGFEAAAWYWHFVDVVWLFLYVSI. Residues 257–261 lie on the Mitochondrial intermembrane side of the membrane; sequence YWWGS.

Belongs to the cytochrome c oxidase subunit 3 family. In terms of assembly, component of the cytochrome c oxidase (complex IV, CIV), a multisubunit enzyme composed of 14 subunits. The complex is composed of a catalytic core of 3 subunits MT-CO1, MT-CO2 and MT-CO3, encoded in the mitochondrial DNA, and 11 supernumerary subunits COX4I, COX5A, COX5B, COX6A, COX6B, COX6C, COX7A, COX7B, COX7C, COX8 and NDUFA4, which are encoded in the nuclear genome. The complex exists as a monomer or a dimer and forms supercomplexes (SCs) in the inner mitochondrial membrane with NADH-ubiquinone oxidoreductase (complex I, CI) and ubiquinol-cytochrome c oxidoreductase (cytochrome b-c1 complex, complex III, CIII), resulting in different assemblies (supercomplex SCI(1)III(2)IV(1) and megacomplex MCI(2)III(2)IV(2)).

It localises to the mitochondrion inner membrane. It catalyses the reaction 4 Fe(II)-[cytochrome c] + O2 + 8 H(+)(in) = 4 Fe(III)-[cytochrome c] + 2 H2O + 4 H(+)(out). Component of the cytochrome c oxidase, the last enzyme in the mitochondrial electron transport chain which drives oxidative phosphorylation. The respiratory chain contains 3 multisubunit complexes succinate dehydrogenase (complex II, CII), ubiquinol-cytochrome c oxidoreductase (cytochrome b-c1 complex, complex III, CIII) and cytochrome c oxidase (complex IV, CIV), that cooperate to transfer electrons derived from NADH and succinate to molecular oxygen, creating an electrochemical gradient over the inner membrane that drives transmembrane transport and the ATP synthase. Cytochrome c oxidase is the component of the respiratory chain that catalyzes the reduction of oxygen to water. Electrons originating from reduced cytochrome c in the intermembrane space (IMS) are transferred via the dinuclear copper A center (CU(A)) of subunit 2 and heme A of subunit 1 to the active site in subunit 1, a binuclear center (BNC) formed by heme A3 and copper B (CU(B)). The BNC reduces molecular oxygen to 2 water molecules using 4 electrons from cytochrome c in the IMS and 4 protons from the mitochondrial matrix. The protein is Cytochrome c oxidase subunit 3 (MT-CO3) of Dasypus novemcinctus (Nine-banded armadillo).